We begin with the raw amino-acid sequence, 139 residues long: Cystatin (139 aa).

A signal peptide spans 1-23 (MAGARGCVVLLAAALMLVGAVLG). A Secondary area of contact motif is present at residues 76–80 (QLVSG). 2 disulfides stabilise this stretch: cysteine 94/cysteine 104 and cysteine 118/cysteine 138. Phosphoserine is present on serine 103.

It belongs to the cystatin family.

It localises to the secreted. Functionally, this protein binds tightly to and inhibits a variety of thiol proteases including ficin, papain, and cathepsins B, C, H, and L. Although isolated from egg white, it is also present in serum. The sequence is that of Cystatin from Gallus gallus (Chicken).